A 931-amino-acid chain; its full sequence is Bifunctional glutamine synthetase adenylyltransferase/adenylyl-removing enzyme (931 aa).

Positions 1 to 434 (MTLAPADLPV…STEFAALLAP (434 aa)) are adenylyl removase. The interval 441–931 (PDALANYWRS…ACRAAELPFA (491 aa)) is adenylyl transferase.

It belongs to the GlnE family. Mg(2+) serves as cofactor.

The enzyme catalyses [glutamine synthetase]-O(4)-(5'-adenylyl)-L-tyrosine + phosphate = [glutamine synthetase]-L-tyrosine + ADP. The catalysed reaction is [glutamine synthetase]-L-tyrosine + ATP = [glutamine synthetase]-O(4)-(5'-adenylyl)-L-tyrosine + diphosphate. Functionally, involved in the regulation of glutamine synthetase GlnA, a key enzyme in the process to assimilate ammonia. When cellular nitrogen levels are high, the C-terminal adenylyl transferase (AT) inactivates GlnA by covalent transfer of an adenylyl group from ATP to specific tyrosine residue of GlnA, thus reducing its activity. Conversely, when nitrogen levels are low, the N-terminal adenylyl removase (AR) activates GlnA by removing the adenylyl group by phosphorolysis, increasing its activity. The regulatory region of GlnE binds the signal transduction protein PII (GlnB) which indicates the nitrogen status of the cell. The chain is Bifunctional glutamine synthetase adenylyltransferase/adenylyl-removing enzyme from Stenotrophomonas maltophilia (strain K279a).